Consider the following 407-residue polypeptide: Na(+)-translocating NADH-quinone reductase subunit F (407 aa).

The helical transmembrane segment at 3–23 (IILGVVMFTLIVLVLSGLILA) threads the bilayer. The region spanning 32–126 (GDVVIEINNE…NMKIELPEEI (95 aa)) is the 2Fe-2S ferredoxin-type domain. [2Fe-2S] cluster contacts are provided by Cys-69, Cys-75, Cys-78, and Cys-110. The FAD-binding FR-type domain occupies 129-269 (VKKWECEVIS…SGPFGEFFAK (141 aa)).

Belongs to the NqrF family. In terms of assembly, composed of six subunits; NqrA, NqrB, NqrC, NqrD, NqrE and NqrF. The cofactor is [2Fe-2S] cluster. FAD serves as cofactor.

The protein localises to the cell inner membrane. The catalysed reaction is a ubiquinone + n Na(+)(in) + NADH + H(+) = a ubiquinol + n Na(+)(out) + NAD(+). NQR complex catalyzes the reduction of ubiquinone-1 to ubiquinol by two successive reactions, coupled with the transport of Na(+) ions from the cytoplasm to the periplasm. The first step is catalyzed by NqrF, which accepts electrons from NADH and reduces ubiquinone-1 to ubisemiquinone by a one-electron transfer pathway. The chain is Na(+)-translocating NADH-quinone reductase subunit F from Klebsiella pneumoniae subsp. pneumoniae (strain ATCC 700721 / MGH 78578).